Reading from the N-terminus, the 506-residue chain is MIKSLLLLISIIIGIVISQEGAYPPAGIYVGLSSNFLTTEGESLTTYAQNELLSMSLPDQSGSSSKASYTFTSFKLGLTLDNIFYNQLQTDVYQIGWETISFELQWNYHICANAIFNPCENGNIQVGTVSGASAAVASNVYVEFNSTSTSIIATNTTMAFDQGAVQVNVHCSNAICVIPVSDIANEVAQNFVTELTNGITKAINEQVPTIEALFTPIKQIPMTLSNGDSFWINLEGTLVEESNPTADLPTITAALNGGVILENTDGNFVYPSQIPSYIPTDSQLESFTSDYSIVVTGFFIESLFDAVFASALPMTINPSQVPSASPVQLNTSDGFFSGVAPGLSQYPNLGIQVNCYSPVTPLVSINSSAISLFNLELSADFIILNGDNPFTAFTVLFTIDASLSTEILTDSPSTFSLNSTLASMTPNATIVTSTIGSVDATGFVQLMQMVQGVIKLPSPAYSVPSKYSMSNVELQLGTQVIQITFDLIDSSLLEKQKIIKKSINFN.

The first 18 residues, 1–18 (MIKSLLLLISIIIGIVIS), serve as a signal peptide directing secretion. 6 N-linked (GlcNAc...) asparagine glycosylation sites follow: Asn145, Asn155, Asn330, Asn366, Asn418, and Asn427.

It belongs to the UPF0522 family.

The protein localises to the secreted. This Dictyostelium discoideum (Social amoeba) protein is UPF0522 protein A.